The chain runs to 300 residues: Porphobilinogen deaminase (300 aa).

Cys-239 carries the post-translational modification S-(dipyrrolylmethanemethyl)cysteine.

This sequence belongs to the HMBS family. Monomer. Dipyrromethane serves as cofactor.

The enzyme catalyses 4 porphobilinogen + H2O = hydroxymethylbilane + 4 NH4(+). It functions in the pathway porphyrin-containing compound metabolism; protoporphyrin-IX biosynthesis; coproporphyrinogen-III from 5-aminolevulinate: step 2/4. Tetrapolymerization of the monopyrrole PBG into the hydroxymethylbilane pre-uroporphyrinogen in several discrete steps. The protein is Porphobilinogen deaminase of Francisella tularensis subsp. tularensis (strain FSC 198).